The chain runs to 379 residues: tRNA-specific 2-thiouridylase MnmA (379 aa).

ATP contacts are provided by residues 9–16 and M35; that span reads AMSGGVDS. The tract at residues 94 to 96 is interaction with target base in tRNA; the sequence is NPD. Residue C99 is the Nucleophile of the active site. C99 and C195 are joined by a disulfide. Residue G123 coordinates ATP. The interaction with tRNA stretch occupies residues 145–147; sequence KDQ. The active-site Cysteine persulfide intermediate is the C195. Residues 307 to 308 form an interaction with tRNA region; the sequence is RY.

It belongs to the MnmA/TRMU family.

The protein localises to the cytoplasm. It catalyses the reaction S-sulfanyl-L-cysteinyl-[protein] + uridine(34) in tRNA + AH2 + ATP = 2-thiouridine(34) in tRNA + L-cysteinyl-[protein] + A + AMP + diphosphate + H(+). Functionally, catalyzes the 2-thiolation of uridine at the wobble position (U34) of tRNA, leading to the formation of s(2)U34. This chain is tRNA-specific 2-thiouridylase MnmA, found in Xylella fastidiosa (strain 9a5c).